The primary structure comprises 157 residues: Protein Smg homolog (157 aa).

It belongs to the Smg family.

The protein is Protein Smg homolog of Shewanella putrefaciens (strain CN-32 / ATCC BAA-453).